The following is a 256-amino-acid chain: Probable galactose dehydrogenase GalD (256 aa).

NAD(+) contacts are provided by residues glycine 20 to serine 23, aspartate 71 to leucine 72, and asparagine 98. Substrate is bound at residue serine 150. Tyrosine 163 (proton acceptor) is an active-site residue. Residues tyrosine 163–lysine 167 and isoleucine 196 each bind NAD(+).

It belongs to the short-chain dehydrogenases/reductases (SDR) family.

Functionally, involved in the degradation of galactose via the DeLey-Doudoroff pathway. Catalyzes the oxidation of galactose in the presence of NAD(+). Uses NAD(+) as a hydrogen acceptor more efficiently than NADP(+). The sequence is that of Probable galactose dehydrogenase GalD (galD) from Rhizobium meliloti (strain 1021) (Ensifer meliloti).